The primary structure comprises 306 residues: MIALLSINFVAFFVFLLILKYWINFQRNKGIGKYIRKEGPSSHFQKSGTPVMGGIVFILAVFPFLFFKETFFISLSTILFGLLGLVDDLKLMENKDYGIRPLRKIFLSFIITLILYVFSPHDYKIYWGSHLIIDSSILYIFLFFIILIAVPNAINLTDGLDGLAGGTSLVTLIFLLVYSFHFKKIALEISLMITALLAFLWFNSHPAEIFMGDVGAFALGGFIASLSVVNKVELLLIFLSGIFLIESLSVFIQVFFYKWKKKRIFLMSPIHHHFELKGWKETKIVWRFYIIHLLIIIGGLVLWYWS.

The next 10 helical transmembrane spans lie at 2–22 (IALL…LKYW), 47–67 (SGTP…FLFF), 71–91 (FFIS…DLKL), 105–125 (IFLS…DYKI), 131–151 (LIID…IAVP), 162–182 (GLAG…SFHF), 185–205 (IALE…FNSH), 209–229 (IFMG…LSVV), 236–256 (LIFL…QVFF), and 284–304 (IVWR…VLWY).

Belongs to the glycosyltransferase 4 family. MraY subfamily. Requires Mg(2+) as cofactor.

The protein localises to the cell inner membrane. The catalysed reaction is UDP-N-acetyl-alpha-D-muramoyl-L-alanyl-gamma-D-glutamyl-meso-2,6-diaminopimeloyl-D-alanyl-D-alanine + di-trans,octa-cis-undecaprenyl phosphate = di-trans,octa-cis-undecaprenyl diphospho-N-acetyl-alpha-D-muramoyl-L-alanyl-D-glutamyl-meso-2,6-diaminopimeloyl-D-alanyl-D-alanine + UMP. The protein operates within cell wall biogenesis; peptidoglycan biosynthesis. Its function is as follows. Catalyzes the initial step of the lipid cycle reactions in the biosynthesis of the cell wall peptidoglycan: transfers peptidoglycan precursor phospho-MurNAc-pentapeptide from UDP-MurNAc-pentapeptide onto the lipid carrier undecaprenyl phosphate, yielding undecaprenyl-pyrophosphoryl-MurNAc-pentapeptide, known as lipid I. The chain is Phospho-N-acetylmuramoyl-pentapeptide-transferase from Dictyoglomus thermophilum (strain ATCC 35947 / DSM 3960 / H-6-12).